The chain runs to 561 residues: MEVTMEDRSVKADKADRDDNNTTSTELLGKMRQTKVISTNQNNNHLIDRMVSIYEMEMIKSQSTETISDVSDVLEFTVIDNCSHGTHTLEHDLRLKGEPIGKSESVKGVSRSLIIQIGMTVIFCALEFITGVVCSSIAMLADSYHMAADVMALIVAFTCIKIATRPSTRLGYGWVRAETLGGFFNGIFMCTVCVLVFQEAVGRIINVHMITHPLQVLVIGFIGLLINLFGMFNLSGHGHSHGGGSHGHSHGGSHGHSHNNKKTKKNDGHGHSHANGHGHSHDGKSDCNGEEEPDHTRLNGKFRSASAMANSDANVRLLDNDDNSNDIIERRLSGVNSQNTIIATVDRQMTPYGTHMASEVLNVSSNNLDKSAQKTEQKKDKNVNIHGVWLHLLSDAFGSVIVMISAGFVYFLPTWKIAAYLDPILSISLASIMGFTAVVLVKTSGEKLLKQTPEGLDLEKVKKDLCSIVGVSKVEKLSVWTLCGQRIIAAAHVNICHPAVFPEAAYKIKNYFHDLGVHSTTIEPTFEDTCMQSMRIMVKKVVDGKSIEEPVSVSTENEITE.

Residues 1–20 (MEVTMEDRSVKADKADRDDN) show a composition bias toward basic and acidic residues. The tract at residues 1 to 26 (MEVTMEDRSVKADKADRDDNNTTSTE) is disordered. Residues 1–112 (MEVTMEDRSV…SESVKGVSRS (112 aa)) are Cytoplasmic-facing. The helical transmembrane segment at 113 to 133 (LIIQIGMTVIFCALEFITGVV) threads the bilayer. The Extracellular segment spans residues 134–136 (CSS). A helical membrane pass occupies residues 137–157 (IAMLADSYHMAADVMALIVAF). Topologically, residues 158–176 (TCIKIATRPSTRLGYGWVR) are cytoplasmic. Residues 177–197 (AETLGGFFNGIFMCTVCVLVF) traverse the membrane as a helical segment. Residues 198-215 (QEAVGRIINVHMITHPLQ) lie on the Extracellular side of the membrane. The chain crosses the membrane as a helical span at residues 216-236 (VLVIGFIGLLINLFGMFNLSG). The Cytoplasmic portion of the chain corresponds to 237-391 (HGHSHGGGSH…NVNIHGVWLH (155 aa)). The disordered stretch occupies residues 240-304 (SHGGGSHGHS…HTRLNGKFRS (65 aa)). A 6 X 2 AA approximate repeats of H-G region spans residues 246–270 (HGHSHGGSHGHSHNNKKTKKNDGHG). Residues 247 to 264 (GHSHGGSHGHSHNNKKTK) are compositionally biased toward basic residues. A helical membrane pass occupies residues 392–412 (LLSDAFGSVIVMISAGFVYFL). The Extracellular portion of the chain corresponds to 413–420 (PTWKIAAY). A helical transmembrane segment spans residues 421 to 441 (LDPILSISLASIMGFTAVVLV). Residues 442 to 561 (KTSGEKLLKQ…SVSTENEITE (120 aa)) lie on the Cytoplasmic side of the membrane.

This sequence belongs to the cation diffusion facilitator (CDF) transporter (TC 2.A.4) family. SLC30A subfamily. Interacts with lin-45 in a zinc-dependent manner. In terms of tissue distribution, expressed in intestinal cells. Expressed in the vulva.

Its subcellular location is the basolateral cell membrane. Involved in the regulation of Pn.p cell fate determination. Involved in zinc metabolism and the decrease of the cytosolic zinc concentration which is thought to modulate Ras signaling. Involved in zinc transport from the intestinal lumen to the pseudocoelum. The protein is Cation diffusion facilitator family protein 1 (cdf-1) of Caenorhabditis elegans.